We begin with the raw amino-acid sequence, 128 residues long: Sulfurtransferase TusD (128 aa).

C78 (cysteine persulfide intermediate) is an active-site residue.

Belongs to the DsrE/TusD family. In terms of assembly, heterohexamer, formed by a dimer of trimers. The hexameric TusBCD complex contains 2 copies each of TusB, TusC and TusD. The TusBCD complex interacts with TusE.

The protein localises to the cytoplasm. In terms of biological role, part of a sulfur-relay system required for 2-thiolation of 5-methylaminomethyl-2-thiouridine (mnm(5)s(2)U) at tRNA wobble positions. Accepts sulfur from TusA and transfers it in turn to TusE. This is Sulfurtransferase TusD from Escherichia fergusonii (strain ATCC 35469 / DSM 13698 / CCUG 18766 / IAM 14443 / JCM 21226 / LMG 7866 / NBRC 102419 / NCTC 12128 / CDC 0568-73).